A 332-amino-acid polypeptide reads, in one-letter code: UPF0285 protein MK0078 (332 aa).

The protein belongs to the UPF0285 family.

The polypeptide is UPF0285 protein MK0078 (Methanopyrus kandleri (strain AV19 / DSM 6324 / JCM 9639 / NBRC 100938)).